A 334-amino-acid chain; its full sequence is Holliday junction branch migration complex subunit RuvB (334 aa).

Positions 4-186 (ADRLIAPENP…FGITQRLEYY (183 aa)) are large ATPase domain (RuvB-L). ATP is bound by residues Ile-25, Arg-26, Gly-67, Lys-70, Thr-71, Thr-72, 133-135 (EDY), Arg-176, Tyr-186, and Arg-223. Thr-71 is a Mg(2+) binding site. The interval 187–257 (KIPDLQNIVQ…TADKALNMLD (71 aa)) is small ATPAse domain (RuvB-S). A head domain (RuvB-H) region spans residues 260 to 334 (SKGFDYMDRK…RAYLHFGIEK (75 aa)). Residues Arg-315 and Arg-320 each coordinate DNA.

The protein belongs to the RuvB family. In terms of assembly, homohexamer. Forms an RuvA(8)-RuvB(12)-Holliday junction (HJ) complex. HJ DNA is sandwiched between 2 RuvA tetramers; dsDNA enters through RuvA and exits via RuvB. An RuvB hexamer assembles on each DNA strand where it exits the tetramer. Each RuvB hexamer is contacted by two RuvA subunits (via domain III) on 2 adjacent RuvB subunits; this complex drives branch migration. In the full resolvosome a probable DNA-RuvA(4)-RuvB(12)-RuvC(2) complex forms which resolves the HJ.

The protein resides in the cytoplasm. The enzyme catalyses ATP + H2O = ADP + phosphate + H(+). Functionally, the RuvA-RuvB-RuvC complex processes Holliday junction (HJ) DNA during genetic recombination and DNA repair, while the RuvA-RuvB complex plays an important role in the rescue of blocked DNA replication forks via replication fork reversal (RFR). RuvA specifically binds to HJ cruciform DNA, conferring on it an open structure. The RuvB hexamer acts as an ATP-dependent pump, pulling dsDNA into and through the RuvAB complex. RuvB forms 2 homohexamers on either side of HJ DNA bound by 1 or 2 RuvA tetramers; 4 subunits per hexamer contact DNA at a time. Coordinated motions by a converter formed by DNA-disengaged RuvB subunits stimulates ATP hydrolysis and nucleotide exchange. Immobilization of the converter enables RuvB to convert the ATP-contained energy into a lever motion, pulling 2 nucleotides of DNA out of the RuvA tetramer per ATP hydrolyzed, thus driving DNA branch migration. The RuvB motors rotate together with the DNA substrate, which together with the progressing nucleotide cycle form the mechanistic basis for DNA recombination by continuous HJ branch migration. Branch migration allows RuvC to scan DNA until it finds its consensus sequence, where it cleaves and resolves cruciform DNA. In Vibrio vulnificus (strain YJ016), this protein is Holliday junction branch migration complex subunit RuvB.